Here is a 156-residue protein sequence, read N- to C-terminus: Small ribosomal subunit protein uS7A/uS7B (156 aa).

Belongs to the universal ribosomal protein uS7 family. In terms of assembly, part of the 30S ribosomal subunit. Contacts proteins S9 and S11.

Functionally, one of the primary rRNA binding proteins, it binds directly to 16S rRNA where it nucleates assembly of the head domain of the 30S subunit. Is located at the subunit interface close to the decoding center, probably blocks exit of the E-site tRNA. This is Small ribosomal subunit protein uS7A/uS7B from Bartonella bacilliformis (strain ATCC 35685 / KC583 / Herrer 020/F12,63).